The primary structure comprises 280 residues: Type 1 encapsulin shell protein (280 aa).

This sequence belongs to the encapsulin family. Family 1 subfamily. As to quaternary structure, this encapsulin nanocompartment is formed by 60 subunits; monomers form pentamers which assemble to form shells. There are 12 pores where the pentamers meet as well as 3-fold axis channels and dimer channels; none are larger than 3-4 Angstroms in diameter. The N-terminus of the protein is inside the shell, the C-terminus is outside.

The protein resides in the encapsulin nanocompartment. Its function is as follows. Shell component of a type 1 encapsulin nanocompartment. Assembles into proteinaceous icosahedral shells 24 nm in diameter in the presence and absence of its ferritin cargo protein. The center of cargo-loaded nanocompartments is loaded with iron. The empty encapsulin nanocompartment sequesters about 2200 Fe ions while the cargo-loaded nanocompartment can maximally sequester about 4150 Fe ions. Does not have any detectable ferroxidase activity. The sequence is that of Type 1 encapsulin shell protein from Rhodospirillum rubrum (strain ATCC 11170 / ATH 1.1.1 / DSM 467 / LMG 4362 / NCIMB 8255 / S1).